We begin with the raw amino-acid sequence, 383 residues long: S-adenosylmethionine synthase (383 aa).

ATP is bound at residue His-15. Position 17 (Asp-17) interacts with Mg(2+). Glu-43 contributes to the K(+) binding site. L-methionine is bound by residues Glu-56 and Gln-99. A flexible loop region spans residues 99-109 (QSPDINQGVDR). Residues 164–166 (DAK), 230–231 (RF), Asp-239, 245–246 (RK), Ala-262, and Lys-266 each bind ATP. Residue Asp-239 participates in L-methionine binding. Lys-270 contributes to the L-methionine binding site.

Belongs to the AdoMet synthase family. As to quaternary structure, homotetramer; dimer of dimers. It depends on Mg(2+) as a cofactor. The cofactor is K(+).

The protein localises to the cytoplasm. The catalysed reaction is L-methionine + ATP + H2O = S-adenosyl-L-methionine + phosphate + diphosphate. It participates in amino-acid biosynthesis; S-adenosyl-L-methionine biosynthesis; S-adenosyl-L-methionine from L-methionine: step 1/1. Catalyzes the formation of S-adenosylmethionine (AdoMet) from methionine and ATP. The overall synthetic reaction is composed of two sequential steps, AdoMet formation and the subsequent tripolyphosphate hydrolysis which occurs prior to release of AdoMet from the enzyme. The protein is S-adenosylmethionine synthase of Pseudoalteromonas translucida (strain TAC 125).